The primary structure comprises 200 residues: ATP-dependent Clp protease proteolytic subunit 1 (200 aa).

Serine 98 (nucleophile) is an active-site residue. Histidine 123 is a catalytic residue.

The protein belongs to the peptidase S14 family. In terms of assembly, fourteen ClpP subunits assemble into 2 heptameric rings which stack back to back to give a disk-like structure with a central cavity, resembling the structure of eukaryotic proteasomes.

It localises to the cytoplasm. The catalysed reaction is Hydrolysis of proteins to small peptides in the presence of ATP and magnesium. alpha-casein is the usual test substrate. In the absence of ATP, only oligopeptides shorter than five residues are hydrolyzed (such as succinyl-Leu-Tyr-|-NHMec, and Leu-Tyr-Leu-|-Tyr-Trp, in which cleavage of the -Tyr-|-Leu- and -Tyr-|-Trp bonds also occurs).. In terms of biological role, cleaves peptides in various proteins in a process that requires ATP hydrolysis. Has a chymotrypsin-like activity. Plays a major role in the degradation of misfolded proteins. The sequence is that of ATP-dependent Clp protease proteolytic subunit 1 from Mycobacterium bovis (strain ATCC BAA-935 / AF2122/97).